Here is a 562-residue protein sequence, read N- to C-terminus: Dihydroxy-acid dehydratase (562 aa).

Position 80 (Asp-80) interacts with Mg(2+). Cys-121 contributes to the [2Fe-2S] cluster binding site. Mg(2+) is bound by residues Asp-122 and Lys-123. Lys-123 carries the post-translational modification N6-carboxylysine. Cys-194 provides a ligand contact to [2Fe-2S] cluster. Glu-446 lines the Mg(2+) pocket. The Proton acceptor role is filled by Ser-472.

Belongs to the IlvD/Edd family. As to quaternary structure, homodimer. The cofactor is [2Fe-2S] cluster. Mg(2+) serves as cofactor.

The catalysed reaction is (2R)-2,3-dihydroxy-3-methylbutanoate = 3-methyl-2-oxobutanoate + H2O. The enzyme catalyses (2R,3R)-2,3-dihydroxy-3-methylpentanoate = (S)-3-methyl-2-oxopentanoate + H2O. The protein operates within amino-acid biosynthesis; L-isoleucine biosynthesis; L-isoleucine from 2-oxobutanoate: step 3/4. It participates in amino-acid biosynthesis; L-valine biosynthesis; L-valine from pyruvate: step 3/4. Its function is as follows. Functions in the biosynthesis of branched-chain amino acids. Catalyzes the dehydration of (2R,3R)-2,3-dihydroxy-3-methylpentanoate (2,3-dihydroxy-3-methylvalerate) into 2-oxo-3-methylpentanoate (2-oxo-3-methylvalerate) and of (2R)-2,3-dihydroxy-3-methylbutanoate (2,3-dihydroxyisovalerate) into 2-oxo-3-methylbutanoate (2-oxoisovalerate), the penultimate precursor to L-isoleucine and L-valine, respectively. In Staphylococcus epidermidis (strain ATCC 35984 / DSM 28319 / BCRC 17069 / CCUG 31568 / BM 3577 / RP62A), this protein is Dihydroxy-acid dehydratase.